The chain runs to 214 residues: Probable chemoreceptor glutamine deamidase CheD (214 aa).

This sequence belongs to the CheD family.

The enzyme catalyses L-glutaminyl-[protein] + H2O = L-glutamyl-[protein] + NH4(+). Probably deamidates glutamine residues to glutamate on methyl-accepting chemotaxis receptors (MCPs), playing an important role in chemotaxis. The chain is Probable chemoreceptor glutamine deamidase CheD from Vibrio vulnificus (strain YJ016).